The primary structure comprises 143 residues: Transcriptional regulator MraZ (143 aa).

SpoVT-AbrB domains are found at residues 5-47 (EYFH…PVSA) and 76-119 (ASNQ…DKEK).

It belongs to the MraZ family. As to quaternary structure, forms oligomers.

It is found in the cytoplasm. The protein resides in the nucleoid. The protein is Transcriptional regulator MraZ of Finegoldia magna (strain ATCC 29328 / DSM 20472 / WAL 2508) (Peptostreptococcus magnus).